The following is a 607-amino-acid chain: Dolichyl-diphosphooligosaccharide--protein glycosyltransferase subunit 1 (607 aa).

Positions M1 to S23 are cleaved as a signal peptide. Residues A24 to E438 lie on the Lumenal side of the membrane. The residue at position 187 (K187) is an N6-acetyllysine. Residue N299 is glycosylated (N-linked (GlcNAc...) asparagine). The helical transmembrane segment at P439–V457 threads the bilayer. The Cytoplasmic segment spans residues R458–L607. N6-acetyllysine; alternate is present on K538. A Glycyl lysine isopeptide (Lys-Gly) (interchain with G-Cter in SUMO2); alternate cross-link involves residue K538.

It belongs to the OST1 family. As to quaternary structure, component of the oligosaccharyltransferase (OST) complex. OST exists in two different complex forms which contain common core subunits RPN1, RPN2, OST48, OST4, DAD1 and TMEM258, either STT3A or STT3B as catalytic subunits, and form-specific accessory subunits. STT3A complex assembly occurs through the formation of 3 subcomplexes. Subcomplex 1 contains RPN1 and TMEM258, subcomplex 2 contains the STT3A-specific subunits STT3A, DC2/OSTC, and KCP2 as well as the core subunit OST4, and subcomplex 3 contains RPN2, DAD1, and OST48. The STT3A complex can form stable complexes with the Sec61 complex or with both the Sec61 and TRAP complexes. Interacts with TMEM35A/NACHO. Post-translationally, ubiquitinated by the ECS(ASB11) complex. Ubiquitinated by RNF128, leading to degradation in a proteasome/lysosome-dependent manner. Ufmylated by UFL1 in response to endoplasmic reticulum stress, promoting reticulophagy of endoplasmic reticulum sheets. As to expression, expressed in all tissues tested.

The protein localises to the endoplasmic reticulum membrane. Its subcellular location is the melanosome. Its pathway is protein modification; protein glycosylation. Subunit of the oligosaccharyl transferase (OST) complex that catalyzes the initial transfer of a defined glycan (Glc(3)Man(9)GlcNAc(2) in eukaryotes) from the lipid carrier dolichol-pyrophosphate to an asparagine residue within an Asn-X-Ser/Thr consensus motif in nascent polypeptide chains, the first step in protein N-glycosylation. N-glycosylation occurs cotranslationally and the complex associates with the Sec61 complex at the channel-forming translocon complex that mediates protein translocation across the endoplasmic reticulum (ER). All subunits are required for a maximal enzyme activity. This is Dolichyl-diphosphooligosaccharide--protein glycosyltransferase subunit 1 from Homo sapiens (Human).